Here is a 288-residue protein sequence, read N- to C-terminus: Fatty acid-binding protein TM_1468 (288 aa).

The 281-residue stretch at Val3 to Val283 folds into the DegV domain. Thr63 and Ser96 together coordinate hexadecanoate.

Monomer.

Its function is as follows. Binds long-chain fatty acids, such as palmitate, and may play a role in lipid transport or fatty acid metabolism. In Thermotoga maritima (strain ATCC 43589 / DSM 3109 / JCM 10099 / NBRC 100826 / MSB8), this protein is Fatty acid-binding protein TM_1468.